A 269-amino-acid polypeptide reads, in one-letter code: Small ribosomal subunit protein uS2 (269 aa).

The tract at residues 224-269 is disordered; the sequence is ANQGREDSEDVYSETENDTEETDEELVSEEDLKEFVENSEEESDEE. A compositionally biased stretch (acidic residues) spans 230–269; it reads DSEDVYSETENDTEETDEELVSEEDLKEFVENSEEESDEE.

This sequence belongs to the universal ribosomal protein uS2 family.

The polypeptide is Small ribosomal subunit protein uS2 (Finegoldia magna (strain ATCC 29328 / DSM 20472 / WAL 2508) (Peptostreptococcus magnus)).